The primary structure comprises 84 residues: Small ribosomal subunit protein uS17 (84 aa).

Belongs to the universal ribosomal protein uS17 family. In terms of assembly, part of the 30S ribosomal subunit.

Its function is as follows. One of the primary rRNA binding proteins, it binds specifically to the 5'-end of 16S ribosomal RNA. This is Small ribosomal subunit protein uS17 from Borrelia recurrentis (strain A1).